We begin with the raw amino-acid sequence, 229 residues long: Potassium/proton antiporter CemA (229 aa).

The next 3 membrane-spanning stretches (helical) occupy residues 7–27 (FTPLFYLASIVFLPWWISFSV), 107–127 (ILHFSTNIICFIILSGYSILG), and 189–209 (IISGLVSTFPVILDTIFKYWI).

This sequence belongs to the CemA family.

It is found in the plastid. The protein resides in the chloroplast inner membrane. It carries out the reaction K(+)(in) + H(+)(out) = K(+)(out) + H(+)(in). In terms of biological role, contributes to K(+)/H(+) antiport activity by supporting proton efflux to control proton extrusion and homeostasis in chloroplasts in a light-dependent manner to modulate photosynthesis. Prevents excessive induction of non-photochemical quenching (NPQ) under continuous-light conditions. Indirectly promotes efficient inorganic carbon uptake into chloroplasts. The polypeptide is Potassium/proton antiporter CemA (Atropa belladonna (Belladonna)).